The sequence spans 140 residues: Hemoglobin subunit alpha (140 aa).

Positions 1 to 140 (LSAADKGHVK…VSTVLTSKYR (140 aa)) constitute a Globin domain. Serine 2 carries the post-translational modification Phosphoserine. An N6-succinyllysine mark is found at lysine 6 and lysine 10. N6-acetyllysine; alternate is present on lysine 15. Lysine 15 is subject to N6-succinyllysine; alternate. Tyrosine 23 carries the phosphotyrosine modification. Serine 34 is modified (phosphoserine). Lysine 39 carries the post-translational modification N6-succinyllysine. A Phosphoserine modification is found at serine 48. Histidine 57 serves as a coordination point for O2. Histidine 86 contacts heme b. Serine 101 is subject to Phosphoserine. Threonine 107 bears the Phosphothreonine mark. A Phosphoserine modification is found at serine 123. 2 positions are modified to phosphothreonine: threonine 133 and threonine 136. Serine 137 carries the phosphoserine modification.

It belongs to the globin family. As to quaternary structure, heterotetramer of two alpha chains and two beta chains. In terms of tissue distribution, red blood cells.

In terms of biological role, involved in oxygen transport from the lung to the various peripheral tissues. Hemopressin acts as an antagonist peptide of the cannabinoid receptor CNR1. Hemopressin-binding efficiently blocks cannabinoid receptor CNR1 and subsequent signaling. In Tragelaphus strepsiceros (Greater kudu), this protein is Hemoglobin subunit alpha (HBA).